A 1686-amino-acid polypeptide reads, in one-letter code: A disintegrin and metalloproteinase with thrombospondin motifs 7 (1686 aa).

Positions 1–27 are cleaved as a signal peptide; it reads MPGGPSPRSPAPLLRPLLLLLCALAPG. Residues 28 to 236 constitute a propeptide that is removed on maturation; sequence APGPAPGRAT…RPRLRRLHQR (209 aa). Residue asparagine 94 is glycosylated (N-linked (GlcNAc...) asparagine). Positions 202–209 match the Cysteine switch motif; sequence STCGVQVY. Cysteine 204 is a Zn(2+) binding site. The Peptidase M12B domain maps to 242-452; the sequence is KWVETLVVAD…GWGLCLDDPP (211 aa). Cystine bridges form between cysteine 318-cysteine 372, cysteine 347-cysteine 354, cysteine 366-cysteine 447, cysteine 405-cysteine 431, cysteine 474-cysteine 497, cysteine 485-cysteine 503, cysteine 492-cysteine 522, cysteine 516-cysteine 527, cysteine 550-cysteine 587, cysteine 554-cysteine 592, and cysteine 565-cysteine 577. Histidine 388 lines the Zn(2+) pocket. Residue glutamate 389 is part of the active site. Residues histidine 392 and histidine 398 each contribute to the Zn(2+) site. One can recognise a Disintegrin domain in the interval 462-537; the sequence is VPPGVLYDVS…VPVGFRPEAV (76 aa). A TSP type-1 1 domain is found at 538-593; that stretch reads DGGWSGWSAWSICSRSCGMGVQSAERQCTQPTPKYKGRYCVGERKRFRLCNLQACP. Residues asparagine 693 and asparagine 778 are each glycosylated (N-linked (GlcNAc...) asparagine). The segment at 698–809 is spacer; sequence HTVSGTFEEA…PGVHYEYTIH (112 aa). TSP type-1 domains are found at residues 821–880, 881–940, and 942–995; these read PVFS…QPCP, ARWW…NRHV, and CPAT…PLCR. 3 disordered regions span residues 1024–1043, 1080–1257, and 1344–1396; these read HHLA…TMGN, PSEE…SPDV, and LGHM…PLAP. Residues 1182 to 1205 show a composition bias toward polar residues; that stretch reads DGLQTPATPESQNDFPVGKDSQSQ. A compositionally biased stretch (basic and acidic residues) spans 1210–1226; that stretch reads WRDRTNEVFKDDEEPKG. Low complexity predominate over residues 1360–1375; the sequence is PESLSPEVPLSSRLLS. TSP type-1 domains are found at residues 1411 to 1459, 1462 to 1522, 1523 to 1567, and 1569 to 1629; these read RNAG…RRCH, PCAT…QPCL, SWYT…PCNT, and PCTQ…EDCE. Positions 1632–1672 constitute a PLAC domain; the sequence is EPPRCERDRLSFGFCETLRLLGRCQLPTIRTQCCRSCSPPS. A disordered region spans residues 1666–1686; it reads RSCSPPSHGAPSRGHQRVARR.

Interacts with COMP. Zn(2+) serves as cofactor. N-glycosylated. Can be O-fucosylated by POFUT2 on a serine or a threonine residue found within the consensus sequence C1-X(2)-(S/T)-C2-G of the TSP type-1 repeat domains where C1 and C2 are the first and second cysteine residue of the repeat, respectively. Fucosylated repeats can then be further glycosylated by the addition of a beta-1,3-glucose residue by the glucosyltransferase, B3GALTL. Fucosylation mediates the efficient secretion of ADAMTS family members. Can also be C-glycosylated with one or two mannose molecules on tryptophan residues within the consensus sequence W-X-X-W of the TPRs. N- and C-glycosylations can also facilitate secretion. In terms of processing, O-glycosylated proteoglycan; contains chondroitin sulfate. Post-translationally, may be cleaved by a furin endopeptidase. The precursor is sequentially processed. As to expression, expressed in heart, brain, placenta, lung, liver, skeletal muscle, kidney and pancreas. Detected in meniscus, bone, tendon, cartilage, synovium, fat and ligaments.

The protein localises to the secreted. It is found in the extracellular space. Its subcellular location is the extracellular matrix. In terms of biological role, metalloprotease. Was previously shown to degrade COMP. However, a later study found no activity against COMP. In Homo sapiens (Human), this protein is A disintegrin and metalloproteinase with thrombospondin motifs 7 (ADAMTS7).